Here is a 111-residue protein sequence, read N- to C-terminus: Putative splicing factor C222.18 (111 aa).

In terms of domain architecture, RRM spans 18–95 (HTLYIRNFGT…DIIFVEWAKS (78 aa)).

Belongs to the splicing factor SR family.

It localises to the nucleus. Has a role in pre-mRNA splicing where it is involved in spliceosome assembly. This Schizosaccharomyces pombe (strain 972 / ATCC 24843) (Fission yeast) protein is Putative splicing factor C222.18.